The primary structure comprises 338 residues: RNA 3'-terminal phosphate cyclase (338 aa).

ATP contacts are provided by residues Q103 and 283–287; that span reads YLADQ. Catalysis depends on H308, which acts as the Tele-AMP-histidine intermediate.

Belongs to the RNA 3'-terminal cyclase family. Type 1 subfamily.

The protein localises to the cytoplasm. It carries out the reaction a 3'-end 3'-phospho-ribonucleotide-RNA + ATP = a 3'-end 2',3'-cyclophospho-ribonucleotide-RNA + AMP + diphosphate. Catalyzes the conversion of 3'-phosphate to a 2',3'-cyclic phosphodiester at the end of RNA. The mechanism of action of the enzyme occurs in 3 steps: (A) adenylation of the enzyme by ATP; (B) transfer of adenylate to an RNA-N3'P to produce RNA-N3'PP5'A; (C) and attack of the adjacent 2'-hydroxyl on the 3'-phosphorus in the diester linkage to produce the cyclic end product. The biological role of this enzyme is unknown but it is likely to function in some aspects of cellular RNA processing. The chain is RNA 3'-terminal phosphate cyclase from Escherichia coli (strain K12 / MC4100 / BW2952).